We begin with the raw amino-acid sequence, 369 residues long: Flagellar P-ring protein (369 aa).

Positions 1 to 24 (MSKTISLLKFIICILISLCSFTYA) are cleaved as a signal peptide.

It belongs to the FlgI family. In terms of assembly, the basal body constitutes a major portion of the flagellar organelle and consists of four rings (L,P,S, and M) mounted on a central rod.

Its subcellular location is the bacterial flagellum basal body. Functionally, assembles around the rod to form the L-ring and probably protects the motor/basal body from shearing forces during rotation. The sequence is that of Flagellar P-ring protein from Buchnera aphidicola subsp. Schizaphis graminum (strain Sg).